The chain runs to 367 residues: 1-deoxy-D-xylulose 5-phosphate reductoisomerase (367 aa).

Residues T10, G11, S12, I13, G34, K35, N36, and N112 each contribute to the NADPH site. Residue K113 participates in 1-deoxy-D-xylulose 5-phosphate binding. E114 is a binding site for NADPH. D138 is a Mn(2+) binding site. The 1-deoxy-D-xylulose 5-phosphate site is built by S139, E140, S164, and H186. E140 is a binding site for Mn(2+). G192 is a binding site for NADPH. 4 residues coordinate 1-deoxy-D-xylulose 5-phosphate: S199, N204, K205, and E208. E208 provides a ligand contact to Mn(2+).

This sequence belongs to the DXR family. The cofactor is Mg(2+). It depends on Mn(2+) as a cofactor.

It catalyses the reaction 2-C-methyl-D-erythritol 4-phosphate + NADP(+) = 1-deoxy-D-xylulose 5-phosphate + NADPH + H(+). The protein operates within isoprenoid biosynthesis; isopentenyl diphosphate biosynthesis via DXP pathway; isopentenyl diphosphate from 1-deoxy-D-xylulose 5-phosphate: step 1/6. Its function is as follows. Catalyzes the NADPH-dependent rearrangement and reduction of 1-deoxy-D-xylulose-5-phosphate (DXP) to 2-C-methyl-D-erythritol 4-phosphate (MEP). The sequence is that of 1-deoxy-D-xylulose 5-phosphate reductoisomerase from Thermus thermophilus (strain ATCC BAA-163 / DSM 7039 / HB27).